The sequence spans 455 residues: GTPase Der (455 aa).

2 EngA-type G domains span residues 4–169 (PVVA…PPKD) and 178–353 (IQMS…EQHR). GTP contacts are provided by residues 10–17 (GRPNVGKS), 57–61 (DTGGL), 120–123 (NKCE), 184–191 (GRPNVGKS), 231–235 (DTAGI), and 296–299 (NKWD). The 86-residue stretch at 354 to 439 (RRVTTSVVNE…PLKLFWRGKQ (86 aa)) folds into the KH-like domain.

This sequence belongs to the TRAFAC class TrmE-Era-EngA-EngB-Septin-like GTPase superfamily. EngA (Der) GTPase family. In terms of assembly, associates with the 50S ribosomal subunit.

Its function is as follows. GTPase that plays an essential role in the late steps of ribosome biogenesis. This is GTPase Der from Synechococcus sp. (strain CC9902).